Consider the following 57-residue polypeptide: Metallothionein (57 aa).

Belongs to the metallothionein superfamily. Type 14 family.

This protein complexes cadmium, zinc and copper. The chain is Metallothionein (mtnA) from Thermostichus vulcanus (Synechococcus vulcanus).